The primary structure comprises 140 residues: Putative 6-pyruvoyl tetrahydrobiopterin synthase (140 aa).

H19 provides a ligand contact to Zn(2+). C38 (proton acceptor) is an active-site residue. The Zn(2+) site is built by H44 and H46. Active-site charge relay system residues include H84 and E129.

The protein belongs to the PTPS family. As to quaternary structure, homohexamer formed of two homotrimers in a head to head fashion. The cofactor is Zn(2+).

It catalyses the reaction 7,8-dihydroneopterin 3'-triphosphate = 6-pyruvoyl-5,6,7,8-tetrahydropterin + triphosphate + H(+). It functions in the pathway cofactor biosynthesis; tetrahydrobiopterin biosynthesis; tetrahydrobiopterin from 7,8-dihydroneopterin triphosphate: step 1/3. Functionally, involved in the biosynthesis of tetrahydrobiopterin, an essential cofactor of aromatic amino acid hydroxylases. Catalyzes the transformation of 7,8-dihydroneopterin triphosphate into 6-pyruvoyl tetrahydropterin. This chain is Putative 6-pyruvoyl tetrahydrobiopterin synthase (ptps-1), found in Caenorhabditis elegans.